The sequence spans 1744 residues: Transcription initiation factor TFIID subunit 1 (1744 aa).

Disordered stretches follow at residues 1-65 (MNNT…EKNE), 248-275 (VSIR…APNS), 429-488 (PEDR…DNDP), 1001-1024 (QNQT…DSDN), 1071-1098 (TTNQ…SQFG), and 1186-1213 (MKKN…PPNP). Residues 43 to 52 (ACSSASNGGS) show a composition bias toward polar residues. The span at 55 to 64 (VKMEPKVEKN) shows a compositional bias: basic and acidic residues. Basic and acidic residues predominate over residues 429–439 (PEDRRHDEGPD). A compositionally biased stretch (basic residues) spans 440 to 449 (HHHHHHHHRK). The span at 477–488 (ESTMAQFTDNDP) shows a compositional bias: polar residues. Over residues 1012 to 1024 (STDDDSTDADSDN) the composition is skewed to acidic residues. Coiled-coil stretches lie at residues 1019-1080 (DADS…KGEK), 1161-1204 (YAQM…TEKK), and 1282-1314 (NFAE…RQMA). Composition is skewed to basic and acidic residues over residues 1076 to 1093 (EKGE…EKKS) and 1186 to 1205 (MKKN…EKKV). Residues 1319–1344 (YGGGASSSGGAGGGGSGIGGSTGGGI) show a composition bias toward gly residues. Residues 1319–1391 (YGGGASSSGG…SKRRSSMMPE (73 aa)) form a disordered region. Over residues 1354-1363 (SQISGTSSFL) the composition is skewed to polar residues. Over residues 1372–1381 (GGNRNSSVSG) the composition is skewed to low complexity. Positions 1379–1386 (VSGSKRRS) match the Nuclear localization signal motif. Bromo domains follow at residues 1404-1512 (RARA…MIER) and 1537-1634 (YLLG…VKDQ). The span at 1666–1694 (DHMDEMEDHPTEEEEEDDDDEIMDDDMDI) shows a compositional bias: acidic residues. Disordered regions lie at residues 1666-1702 (DHMD…YSYD) and 1714-1744 (NDLA…LDSF).

Belongs to the TAF1 family. Component of the TFIID basal transcription factor complex, composed of TATA-box-binding protein tbp-1, and a number of TBP-associated factors (TAFs).

The protein resides in the nucleus. Functionally, the TFIID basal transcription factor complex plays a major role in the initiation of RNA polymerase II (Pol II)-dependent transcription. TFIID recognizes and binds promoters via its subunit tbp-1, a TATA-box-binding protein, and promotes assembly of the pre-initiation complex (PIC). The TFIID complex consists of tbp-1 and TBP-associated factors (TAFs), including taf-1. May regulate RNA polymerase II activity and thereby may control transcription initiation by RNA polymerase II. Required for early embryonic development. Essential for embryonic transcription of several genes. This chain is Transcription initiation factor TFIID subunit 1, found in Caenorhabditis elegans.